Consider the following 156-residue polypeptide: Small ribosomal subunit protein uS7c (156 aa).

Belongs to the universal ribosomal protein uS7 family. In terms of assembly, part of the 30S ribosomal subunit.

It localises to the plastid. Its subcellular location is the chloroplast. Its function is as follows. One of the primary rRNA binding proteins, it binds directly to 16S rRNA where it nucleates assembly of the head domain of the 30S subunit. This Gracilaria tenuistipitata var. liui (Red alga) protein is Small ribosomal subunit protein uS7c (rps7).